The following is a 570-amino-acid chain: Phosphoenolpyruvate-protein phosphotransferase (570 aa).

The Tele-phosphohistidine intermediate role is filled by His-189. Phosphoenolpyruvate contacts are provided by Arg-296 and Arg-332. Residues Glu-431 and Asp-455 each coordinate Mg(2+). Residues 454-455 and Arg-465 each bind phosphoenolpyruvate; that span reads ND. The Proton donor role is filled by Cys-502.

It belongs to the PEP-utilizing enzyme family. Homodimer. Mg(2+) serves as cofactor.

The protein resides in the cytoplasm. It carries out the reaction L-histidyl-[protein] + phosphoenolpyruvate = N(pros)-phospho-L-histidyl-[protein] + pyruvate. In terms of biological role, general (non sugar-specific) component of the phosphoenolpyruvate-dependent sugar phosphotransferase system (sugar PTS). This major carbohydrate active-transport system catalyzes the phosphorylation of incoming sugar substrates concomitantly with their translocation across the cell membrane. Enzyme I transfers the phosphoryl group from phosphoenolpyruvate (PEP) to the phosphoryl carrier protein (HPr). This chain is Phosphoenolpyruvate-protein phosphotransferase (ptsI), found in Buchnera aphidicola subsp. Schizaphis graminum (strain Sg).